Here is a 436-residue protein sequence, read N- to C-terminus: Histidinol dehydrogenase (436 aa).

Residues Y135, Q197, and N220 each contribute to the NAD(+) site. Positions 243, 265, and 268 each coordinate substrate. Residues Q265 and H268 each coordinate Zn(2+). Active-site proton acceptor residues include E334 and H335. H335, D368, E422, and H427 together coordinate substrate. D368 lines the Zn(2+) pocket. Residue H427 coordinates Zn(2+).

This sequence belongs to the histidinol dehydrogenase family. Zn(2+) is required as a cofactor.

The enzyme catalyses L-histidinol + 2 NAD(+) + H2O = L-histidine + 2 NADH + 3 H(+). It functions in the pathway amino-acid biosynthesis; L-histidine biosynthesis; L-histidine from 5-phospho-alpha-D-ribose 1-diphosphate: step 9/9. Functionally, catalyzes the sequential NAD-dependent oxidations of L-histidinol to L-histidinaldehyde and then to L-histidine. The sequence is that of Histidinol dehydrogenase from Deinococcus radiodurans (strain ATCC 13939 / DSM 20539 / JCM 16871 / CCUG 27074 / LMG 4051 / NBRC 15346 / NCIMB 9279 / VKM B-1422 / R1).